The sequence spans 460 residues: Phosphoglucomutase (460 aa).

The active-site Phosphoserine intermediate is the serine 103. Serine 103 contributes to the Mg(2+) binding site. Residues 103–104 and lysine 113 contribute to the substrate site; that span reads SH. Mg(2+) is bound by residues aspartate 239, aspartate 241, and aspartate 243. Residues 243-244, threonine 303, and 322-324 contribute to the substrate site; these read DR and EMS.

The protein belongs to the phosphohexose mutase family. Requires Mg(2+) as cofactor.

The protein localises to the cytoplasm. It carries out the reaction alpha-D-glucose 1-phosphate = alpha-D-glucose 6-phosphate. Functionally, this enzyme participates in both the breakdown and synthesis of glucose. The chain is Phosphoglucomutase (pgm) from Neisseria gonorrhoeae.